Consider the following 345-residue polypeptide: Heat stress transcription factor A-2 (345 aa).

Low complexity predominate over residues 17-30 (GSVAASSSVGSSSS). The interval 17–40 (GSVAASSSVGSSSSPRPMEGLNET) is disordered. Residues 42–136 (PPPFLTKTYE…LLKNIKRRRN (95 aa)) mediate DNA binding. Residues 150–216 (SCVEVGQYGF…QMMTFLAKAL (67 aa)) form a hydrophobic repeat HR-A/B region. Positions 231 to 238 (EKKSLFGL) match the Nuclear localization signal motif. Residues 273 to 282 (EMLFAAAIDD) carry the AHA1 motif. Residue Lys315 forms a Glycyl lysine isopeptide (Lys-Gly) (interchain with G-Cter in SUMO) linkage. An AHA2 motif is present at residues 324–333 (LDWDSQDLHD). The Nuclear export signal signature appears at 334 to 341 (MVDQMGFL).

This sequence belongs to the HSF family. Class A subfamily. In terms of assembly, homotrimer. Interacts with SUMO1. Binds to HSBP. Exhibits temperature-dependent phosphorylation. In terms of processing, sumoylated at Lys-315. Sumoylation represses its function.

It localises to the cytoplasm. The protein localises to the nucleus. Transcriptional activator that specifically binds DNA sequence 5'-AGAAnnTTCT-3' known as heat shock promoter elements (HSE). Seems to be involved in other environmental stress responses. Activates ascorbate peroxidase 2 (APX2) in addition to several heat shock protein (HSPs). Binds to the promoter of SGIP1 and activates its expression in heat acclimated plants. Involved in the mechanisms necessary for quick response to heat and subsequent heritable transgenerational memory of heat acclimation (global warming) such as early flowering and attenuated immunity; this process includes epigenetic regulation as well as post-transcriptional gene silencing (PTGS). In response to heat, HSFA2 is activated and promotes the expression of REF6 which in turn derepresses HSFA2, thus establishing an inheritable feedback loop able to trigger SGIP1 and subsequent SGIP1-mediated SGS3 degradation; this prevents the biosynthesis of trans-acting siRNA (tasiRNA) and leads to the release of HTT5, which drives early flowering but attenuates immunity. The chain is Heat stress transcription factor A-2 from Arabidopsis thaliana (Mouse-ear cress).